We begin with the raw amino-acid sequence, 82 residues long: DNA-directed RNA polymerase subunit omega (82 aa).

This sequence belongs to the RNA polymerase subunit omega family. In terms of assembly, in cyanobacteria the RNAP catalytic core is composed of 2 alpha, 1 beta, 1 beta', 1 gamma and 1 omega subunit. When a sigma factor is associated with the core the holoenzyme is formed, which can initiate transcription.

It carries out the reaction RNA(n) + a ribonucleoside 5'-triphosphate = RNA(n+1) + diphosphate. Promotes RNA polymerase assembly. Latches the N- and C-terminal regions of the beta' subunit thereby facilitating its interaction with the beta and alpha subunits. This Trichodesmium erythraeum (strain IMS101) protein is DNA-directed RNA polymerase subunit omega.